Here is a 499-residue protein sequence, read N- to C-terminus: Ribose import ATP-binding protein RbsA (499 aa).

ABC transporter domains are found at residues 3–240 (VEMS…VGRE) and 250–494 (LEPG…TGGD). ATP is bound at residue 35–42 (GENGAGKS).

This sequence belongs to the ABC transporter superfamily. Ribose importer (TC 3.A.1.2.1) family. In terms of assembly, the complex is composed of an ATP-binding protein (RbsA), two transmembrane proteins (RbsC) and a solute-binding protein (RbsB).

It localises to the cell membrane. It catalyses the reaction D-ribose(out) + ATP + H2O = D-ribose(in) + ADP + phosphate + H(+). In terms of biological role, part of the ABC transporter complex RbsABC involved in ribose import. Responsible for energy coupling to the transport system. In Shouchella clausii (strain KSM-K16) (Alkalihalobacillus clausii), this protein is Ribose import ATP-binding protein RbsA.